Reading from the N-terminus, the 534-residue chain is CAP-Gly domain-containing linker protein 3 (534 aa).

Residues 1–16 (MTREDLPDSTPEESKL) show a composition bias toward basic and acidic residues. The disordered stretch occupies residues 1-33 (MTREDLPDSTPEESKLPMEFQSPLLEKRRRPVV). ANK repeat units follow at residues 107-148 (TDMT…LRSR), 150-173 (TNMN…LLKA), and 187-299 (NHGT…KAGT). One can recognise a CAP-Gly 1 domain in the interval 304 to 346 (GTTEFASGQWVGVELDEPDGKNDGSVGGIRYFICPPKQGIFAP). Positions 349 to 391 (KISKAPDQPPSSVTSTPRTPRVDFSRVTGKGRKEKKATHKKSL) are disordered. The segment covering 358-367 (PSSVTSTPRT) has biased composition (low complexity). Residues 377 to 390 (GKGRKEKKATHKKS) are compositionally biased toward basic residues. A CAP-Gly 2 domain is found at 423–465 (GKTDFAPGYWFGIELEKPTGKHDGSVFGVRYFTCSAKNGVFAP). The interval 475-534 (PKDPQTDNNDMKKVHQVTMTQPKRNFTKVRTPKEIASENSMSRILFCCWFPWLLRAEMKS) is goLD.

As to quaternary structure, homodimer.

Its subcellular location is the cytoplasm. It is found in the golgi apparatus. The protein localises to the golgi stack. In terms of biological role, functions as a cytoplasmic linker protein. Involved in TGN-endosome dynamics. This is CAP-Gly domain-containing linker protein 3 (clip3) from Xenopus laevis (African clawed frog).